The following is a 335-amino-acid chain: MAVTNLPTCDGLFIISLIVIVSSIFGTSSAQLNATFYSGTCPNASAIVRSTIQQALQSDTRIGASLIRLHFHDCFVNGCDASILLDDTGSIQSEKNAGPNVNSARGFNVVDNIKTALENACPGVVSCSDVLALASEASVSLAGGPSWTVLLGRRDSLTANLAGANSSIPSPIESLSNITFKFSAVGLNTNDLVALSGAHTFGRARCGVFNNRLFNFSGTGNPDPTLNSTLLSTLQQLCPQNGSASTITNLDLSTPDAFDNNYFANLQSNDGLLQSDQELFSTTGSSTIAIVTSFASNQTLFFQAFAQSMINMGNISPLTGSNGEIRLDCKKVNGS.

An N-terminal signal peptide occupies residues 1-30 (MAVTNLPTCDGLFIISLIVIVSSIFGTSSA). A Pyrrolidone carboxylic acid modification is found at Q31. N-linked (GlcNAc...) asparagine glycosylation is found at N33 and N43. 4 disulfides stabilise this stretch: C41/C121, C74/C79, C127/C329, and C206/C238. H72 functions as the Proton acceptor in the catalytic mechanism. Ca(2+)-binding residues include D73, V76, G78, D80, and S82. N165 is a glycosylation site (N-linked (GlcNAc...) asparagine). P169 contacts substrate. N-linked (GlcNAc...) asparagine glycosylation is present at N177. H199 is a binding site for heme b. Position 200 (T200) interacts with Ca(2+). N215, N227, and N241 each carry an N-linked (GlcNAc...) asparagine glycan. Positions 251, 254, and 259 each coordinate Ca(2+). Residue N297 is glycosylated (N-linked (GlcNAc...) asparagine).

It belongs to the peroxidase family. Classical plant (class III) peroxidase subfamily. Ca(2+) is required as a cofactor. The cofactor is heme b. As to expression, mainly expressed in roots.

It localises to the secreted. The enzyme catalyses 2 a phenolic donor + H2O2 = 2 a phenolic radical donor + 2 H2O. Functionally, removal of H(2)O(2), oxidation of toxic reductants, biosynthesis and degradation of lignin, suberization, auxin catabolism, response to environmental stresses such as wounding, pathogen attack and oxidative stress. These functions might be dependent on each isozyme/isoform in each plant tissue. Its function is as follows. Closely linked to lignin formation by showing monolignol substrate specificity. The sequence is that of Peroxidase 53 (PER53) from Arabidopsis thaliana (Mouse-ear cress).